Here is a 237-residue protein sequence, read N- to C-terminus: Lipoprotein-releasing system ATP-binding protein LolD (237 aa).

One can recognise an ABC transporter domain in the interval 16–237; the sequence is LKCEGLTRIY…LDQGRLSEDA (222 aa). 52 to 59 serves as a coordination point for ATP; sequence GSSGSGKT.

The protein belongs to the ABC transporter superfamily. Lipoprotein translocase (TC 3.A.1.125) family. As to quaternary structure, the complex is composed of two ATP-binding proteins (LolD) and two transmembrane proteins (LolC and LolE).

The protein resides in the cell inner membrane. In terms of biological role, part of the ABC transporter complex LolCDE involved in the translocation of mature outer membrane-directed lipoproteins, from the inner membrane to the periplasmic chaperone, LolA. Responsible for the formation of the LolA-lipoprotein complex in an ATP-dependent manner. This is Lipoprotein-releasing system ATP-binding protein LolD from Chromohalobacter salexigens (strain ATCC BAA-138 / DSM 3043 / CIP 106854 / NCIMB 13768 / 1H11).